Reading from the N-terminus, the 292-residue chain is Diaminopimelate epimerase (292 aa).

Substrate contacts are provided by N13, Q46, and N66. Catalysis depends on C75, which acts as the Proton donor. Substrate is bound by residues 76–77 (GN), N166, N199, and 217–218 (ER). C226 functions as the Proton acceptor in the catalytic mechanism. 227–228 (GT) contacts substrate.

It belongs to the diaminopimelate epimerase family. In terms of assembly, homodimer.

The protein localises to the cytoplasm. It carries out the reaction (2S,6S)-2,6-diaminopimelate = meso-2,6-diaminopimelate. Its pathway is amino-acid biosynthesis; L-lysine biosynthesis via DAP pathway; DL-2,6-diaminopimelate from LL-2,6-diaminopimelate: step 1/1. Functionally, catalyzes the stereoinversion of LL-2,6-diaminopimelate (L,L-DAP) to meso-diaminopimelate (meso-DAP), a precursor of L-lysine and an essential component of the bacterial peptidoglycan. The polypeptide is Diaminopimelate epimerase (Ralstonia pickettii (strain 12J)).